The chain runs to 523 residues: 2-isopropylmalate synthase (523 aa).

Residues 5–267 (VVIFDTTLRD…QTRINHNEIW (263 aa)) form the Pyruvate carboxyltransferase domain. 4 residues coordinate Mn(2+): aspartate 14, histidine 202, histidine 204, and asparagine 238. Residues 392–523 (RMDYFSVQSG…QNKENNKETV (132 aa)) are regulatory domain.

Belongs to the alpha-IPM synthase/homocitrate synthase family. LeuA type 1 subfamily. Homodimer. It depends on Mn(2+) as a cofactor.

The protein resides in the cytoplasm. It carries out the reaction 3-methyl-2-oxobutanoate + acetyl-CoA + H2O = (2S)-2-isopropylmalate + CoA + H(+). It participates in amino-acid biosynthesis; L-leucine biosynthesis; L-leucine from 3-methyl-2-oxobutanoate: step 1/4. In terms of biological role, catalyzes the condensation of the acetyl group of acetyl-CoA with 3-methyl-2-oxobutanoate (2-ketoisovalerate) to form 3-carboxy-3-hydroxy-4-methylpentanoate (2-isopropylmalate). In Enterobacter sp. (strain 638), this protein is 2-isopropylmalate synthase.